The chain runs to 170 residues: Peptide deformylase (170 aa).

The Fe cation site is built by cysteine 92 and histidine 134. Glutamate 135 is a catalytic residue. Residue histidine 138 coordinates Fe cation.

This sequence belongs to the polypeptide deformylase family. Requires Fe(2+) as cofactor.

The catalysed reaction is N-terminal N-formyl-L-methionyl-[peptide] + H2O = N-terminal L-methionyl-[peptide] + formate. In terms of biological role, removes the formyl group from the N-terminal Met of newly synthesized proteins. Requires at least a dipeptide for an efficient rate of reaction. N-terminal L-methionine is a prerequisite for activity but the enzyme has broad specificity at other positions. This Chromohalobacter salexigens (strain ATCC BAA-138 / DSM 3043 / CIP 106854 / NCIMB 13768 / 1H11) protein is Peptide deformylase.